The primary structure comprises 32 residues: Cytochrome b6-f complex subunit 7 (32 aa).

Residues 9–27 (AVLSSVLVLVGLAIGFLLL) form a helical membrane-spanning segment.

It belongs to the PetM family. In terms of assembly, the 4 large subunits of the cytochrome b6-f complex are cytochrome b6, subunit IV (17 kDa polypeptide, PetD), cytochrome f and the Rieske protein, while the 4 small subunits are PetG, PetL, PetM and PetN. The complex functions as a dimer.

The protein resides in the plastid. It localises to the chloroplast thylakoid membrane. In terms of biological role, component of the cytochrome b6-f complex, which mediates electron transfer between photosystem II (PSII) and photosystem I (PSI), cyclic electron flow around PSI, and state transitions. The protein is Cytochrome b6-f complex subunit 7 of Pyropia yezoensis (Susabi-nori).